We begin with the raw amino-acid sequence, 972 residues long: 116 kDa U5 small nuclear ribonucleoprotein component (972 aa).

An N-acetylmethionine modification is found at M1. The tract at residues 1–54 (MDTDLYDEFGNYIGPELDSDEDDDELGRETKDLDEMDDDDDDDDVGDHDDDHPG) is disordered. Acidic residues-rich tracts occupy residues 17 to 26 (LDSDEDDDEL) and 34 to 48 (DEMDDDDDDDDVGDH). At S19 the chain carries Phosphoserine. K64 participates in a covalent cross-link: Glycyl lysine isopeptide (Lys-Gly) (interchain with G-Cter in SUMO1); alternate. K64 is covalently cross-linked (Glycyl lysine isopeptide (Lys-Gly) (interchain with G-Cter in SUMO2); alternate). T86 carries the post-translational modification Phosphothreonine. Residues 127-409 (ELIRNVTLCG…GIHLTKEELK (283 aa)) form the tr-type G domain. GTP is bound by residues 136-143 (GHLHHGKT), 204-208 (DTPGH), and 258-261 (NKID).

It belongs to the TRAFAC class translation factor GTPase superfamily. Classic translation factor GTPase family. EF-G/EF-2 subfamily. In terms of assembly, component of the U5 snRNP and the U4/U6-U5 tri-snRNP complex, a building block of the spliceosome. The U4/U6-U5 tri-snRNP complex is composed of the U4, U6 and U5 snRNAs and at least PRPF3, PRPF4, PRPF6, PRPF8, PRPF31, SNRNP200, TXNL4A, SNRNP40, DDX23, CD2BP2, PPIH, SNU13, EFTUD2, SART1 and USP39. Component of the pre-catalytic, catalytic and post-catalytic spliceosome complexes. Component of the minor spliceosome, which splices U12-type introns. Within this complex, interacts with CRIPT. Interacts with ERBB4 and PRPF8. Interacts with PIH1D1. Interacts with RPAP3 and URI1 in a ZNHIT2-dependent manner. Interacts with NRDE2. Interacts with FAM50A. Interacts with UBL5.

It is found in the nucleus. In terms of biological role, required for pre-mRNA splicing as component of the spliceosome, including pre-catalytic, catalytic and post-catalytic spliceosomal complexes. Component of the U5 snRNP and the U4/U6-U5 tri-snRNP complex, a building block of the spliceosome. As a component of the minor spliceosome, involved in the splicing of U12-type introns in pre-mRNAs. This is 116 kDa U5 small nuclear ribonucleoprotein component (EFTUD2) from Homo sapiens (Human).